A 344-amino-acid chain; its full sequence is Geranylgeranyl transferase type-2 subunit alpha (344 aa).

PFTA repeat units lie at residues Tyr44–Phe78, Leu89–Tyr123, Asn125–Arg159, Leu165–Asn199, Ile214–Pro248, and Tyr266–Asn293.

Belongs to the protein prenyltransferase subunit alpha family. In terms of assembly, heterodimer of an alpha and a beta subunit.

The enzyme catalyses geranylgeranyl diphosphate + L-cysteinyl-[protein] = S-geranylgeranyl-L-cysteinyl-[protein] + diphosphate. In terms of biological role, catalyzes the transfer of a geranyl-geranyl moiety from geranyl-geranyl pyrophosphate to proteins having the C-terminal-XCC or -XCXC, where both cysteines may become modified. The chain is Geranylgeranyl transferase type-2 subunit alpha (bet4) from Schizosaccharomyces pombe (strain 972 / ATCC 24843) (Fission yeast).